The following is a 512-amino-acid chain: Cytochrome P450 1A2 (512 aa).

Ser-65 is a glycosylation site (O-linked (GlcNAc) serine). Phe-222 lines the substrate pocket. Cys-454 contributes to the heme binding site.

This sequence belongs to the cytochrome P450 family. As to quaternary structure, interacts with PGRMC1; the interaction requires PGRMC1 homodimerization. Heme is required as a cofactor.

The protein resides in the endoplasmic reticulum membrane. It is found in the microsome membrane. The catalysed reaction is an organic molecule + reduced [NADPH--hemoprotein reductase] + O2 = an alcohol + oxidized [NADPH--hemoprotein reductase] + H2O + H(+). It carries out the reaction 17beta-estradiol + reduced [NADPH--hemoprotein reductase] + O2 = 2-hydroxy-17beta-estradiol + oxidized [NADPH--hemoprotein reductase] + H2O + H(+). It catalyses the reaction 17beta-estradiol + reduced [NADPH--hemoprotein reductase] + O2 = 4-hydroxy-17beta-estradiol + oxidized [NADPH--hemoprotein reductase] + H2O + H(+). The enzyme catalyses estrone + reduced [NADPH--hemoprotein reductase] + O2 = 2-hydroxyestrone + oxidized [NADPH--hemoprotein reductase] + H2O + H(+). The catalysed reaction is estrone + reduced [NADPH--hemoprotein reductase] + O2 = 4-hydroxyestrone + oxidized [NADPH--hemoprotein reductase] + H2O + H(+). It carries out the reaction cholesterol + reduced [NADPH--hemoprotein reductase] + O2 = 25-hydroxycholesterol + oxidized [NADPH--hemoprotein reductase] + H2O + H(+). It catalyses the reaction all-trans-retinol + reduced [NADPH--hemoprotein reductase] + O2 = all-trans-retinal + oxidized [NADPH--hemoprotein reductase] + 2 H2O + H(+). The enzyme catalyses all-trans-retinal + reduced [NADPH--hemoprotein reductase] + O2 = all-trans-retinoate + oxidized [NADPH--hemoprotein reductase] + H2O + 2 H(+). The catalysed reaction is (5Z,8Z,11Z,14Z)-eicosatetraenoate + reduced [NADPH--hemoprotein reductase] + O2 = (14R,15S)-epoxy-(5Z,8Z,11Z)-eicosatrienoate + oxidized [NADPH--hemoprotein reductase] + H2O + H(+). It carries out the reaction (5Z,8Z,11Z,14Z)-eicosatetraenoate + reduced [NADPH--hemoprotein reductase] + O2 = (14S,15R)-epoxy-(5Z,8Z,11Z)-eicosatrienoate + oxidized [NADPH--hemoprotein reductase] + H2O + H(+). It catalyses the reaction (5Z,8Z,11Z,14Z,17Z)-eicosapentaenoate + reduced [NADPH--hemoprotein reductase] + O2 = (17R,18S)-epoxy-(5Z,8Z,11Z,14Z)-eicosatetraenoate + oxidized [NADPH--hemoprotein reductase] + H2O + H(+). The enzyme catalyses (4Z,7Z,10Z,13Z,16Z,19Z)-docosahexaenoate + reduced [NADPH--hemoprotein reductase] + O2 = (19R,20S)-epoxy-(4Z,7Z,10Z,13Z,16Z)-docosapentaenoate + oxidized [NADPH--hemoprotein reductase] + H2O + H(+). The catalysed reaction is (5S)-hydroperoxy-(6E,8Z,11Z,14Z)-eicosatetraenoate = 5-oxo-(6E,8Z,11Z,14Z)-eicosatetraenoate + H2O. It carries out the reaction (12S)-hydroperoxy-(5Z,8Z,10E,14Z)-eicosatetraenoate = 12-oxo-(5Z,8Z,10E,14Z)-eicosatetraenoate + H2O. It catalyses the reaction (15S)-hydroperoxy-(5Z,8Z,11Z,13E)-eicosatetraenoate = 15-oxo-(5Z,8Z,11Z,13E)-eicosatetraenoate + H2O. The enzyme catalyses (13S)-hydroperoxy-(9Z,11E)-octadecadienoate = 13-oxo-(9Z,11E)-octadecadienoate + H2O. The catalysed reaction is (5Z,8Z,11Z,14Z)-eicosatetraenoate + reduced [NADPH--hemoprotein reductase] + O2 = 13-hydroxy-(5Z,8Z,11Z,14Z)-eicosatetraenoate + oxidized [NADPH--hemoprotein reductase] + H2O + H(+). It carries out the reaction (5Z,8Z,11Z,14Z)-eicosatetraenoate + reduced [NADPH--hemoprotein reductase] + O2 = 19-hydroxy-(5Z,8Z,11Z,14Z)-eicosatetraenoate + oxidized [NADPH--hemoprotein reductase] + H2O + H(+). It catalyses the reaction (9Z,12Z)-octadecadienoate + reduced [NADPH--hemoprotein reductase] + O2 = 11-hydroxy-(9Z,12Z)-octadecadienoate + oxidized [NADPH--hemoprotein reductase] + H2O + H(+). It functions in the pathway cofactor metabolism; retinol metabolism. The protein operates within steroid metabolism; cholesterol metabolism. Its pathway is lipid metabolism; arachidonate metabolism. Its function is as follows. A cytochrome P450 monooxygenase involved in the metabolism of various endogenous substrates, including fatty acids, steroid hormones and vitamins. Mechanistically, uses molecular oxygen inserting one oxygen atom into a substrate, and reducing the second into a water molecule, with two electrons provided by NADPH via cytochrome P450 reductase (NADPH--hemoprotein reductase). Catalyzes the hydroxylation of carbon-hydrogen bonds. Exhibits high catalytic activity for the formation of hydroxyestrogens from estrone (E1) and 17beta-estradiol (E2), namely 2-hydroxy E1 and E2. Metabolizes cholesterol toward 25-hydroxycholesterol, a physiological regulator of cellular cholesterol homeostasis. May act as a major enzyme for all-trans retinoic acid biosynthesis in the liver. Catalyzes two successive oxidative transformation of all-trans retinol to all-trans retinal and then to the active form all-trans retinoic acid. Primarily catalyzes stereoselective epoxidation of the last double bond of polyunsaturated fatty acids (PUFA), displaying a strong preference for the (R,S) stereoisomer. Catalyzes bisallylic hydroxylation and omega-1 hydroxylation of PUFA. May also participate in eicosanoids metabolism by converting hydroperoxide species into oxo metabolites (lipoxygenase-like reaction, NADPH-independent). Plays a role in the oxidative metabolism of xenobiotics. Catalyzes the N-hydroxylation of heterocyclic amines and the O-deethylation of phenacetin. Metabolizes caffeine via N3-demethylation. This Felis catus (Cat) protein is Cytochrome P450 1A2 (CYP1A2).